The primary structure comprises 1007 residues: Tolloid-like protein 1 (1007 aa).

Positions 1 to 25 (MNMPSWLIFLLTGWTFCGNFFACGG) are cleaved as a signal peptide. Residues 26-142 (LDYDYPNYEN…GKSKKIRIPR (117 aa)) constitute a propeptide that is removed on maturation. The tract at residues 115–139 (SGQENTTANSQKVDNNQSGKSKKIR) is disordered. A compositionally biased stretch (polar residues) spans 116 to 133 (GQENTTANSQKVDNNQSG). Residues 143 to 342 (AATSRTERIW…AQARKLYRCP (200 aa)) form the Peptidase M12A domain. Asparagine 164 carries N-linked (GlcNAc...) asparagine glycosylation. 4 disulfides stabilise this stretch: cysteine 185/cysteine 341, cysteine 205/cysteine 227, cysteine 207/cysteine 208, and cysteine 344/cysteine 370. Histidine 235 is a binding site for Zn(2+). Residue glutamate 236 is part of the active site. Positions 239 and 245 each coordinate Zn(2+). 2 consecutive CUB domains span residues 344-456 (CGET…YEAI) and 457-569 (CGGE…FLKE). Residues asparagine 354 and asparagine 385 are each glycosylated (N-linked (GlcNAc...) asparagine). 15 cysteine pairs are disulfide-bonded: cysteine 397-cysteine 419, cysteine 457-cysteine 483, cysteine 510-cysteine 532, cysteine 573-cysteine 585, cysteine 581-cysteine 594, cysteine 596-cysteine 609, cysteine 613-cysteine 639, cysteine 666-cysteine 688, cysteine 729-cysteine 740, cysteine 736-cysteine 749, cysteine 751-cysteine 764, cysteine 769-cysteine 795, cysteine 822-cysteine 844, cysteine 882-cysteine 912, and cysteine 939-cysteine 961. An EGF-like 1; calcium-binding domain is found at 569–610 (EEDECARPDNGGCEQRCVNTLGSYKCSCDPGYELAPDKKSCE). The 113-residue stretch at 613–725 (CGGLLTKLNG…KGFRAHFFSD (113 aa)) folds into the CUB 3 domain. Asparagine 621 carries an N-linked (GlcNAc...) asparagine glycan. In terms of domain architecture, EGF-like 2; calcium-binding spans 725-765 (DKDECSKDNGGCQHECINTIGSYVCQCRNGFVLHDNKHDCK). CUB domains lie at 769-881 (CEHR…HSTE) and 882-998 (CGGR…YRSV).

Zn(2+) serves as cofactor.

The protein resides in the secreted. In terms of biological role, protease which processes procollagen C-propeptides, such as chordin. Required for the embryonic development. Predominant protease, which in the development, influences dorsal-ventral patterning and skeletogenesis. This Xenopus laevis (African clawed frog) protein is Tolloid-like protein 1 (tll1).